Consider the following 457-residue polypeptide: Cystathionine beta-lyase (457 aa).

Positions 1 to 41 (MSTPNSDSPAAQAAKKVFSRLDLDGHNLPPSPAPSSPHNGR) are disordered.

This sequence belongs to the trans-sulfuration enzymes family. Requires pyridoxal 5'-phosphate as cofactor.

The protein localises to the cytoplasm. Its subcellular location is the nucleus. The enzyme catalyses L,L-cystathionine + H2O = L-homocysteine + pyruvate + NH4(+). It carries out the reaction an S-substituted L-cysteine + H2O = a thiol + pyruvate + NH4(+). Its pathway is amino-acid biosynthesis; L-methionine biosynthesis via de novo pathway; L-homocysteine from L-cystathionine: step 1/1. Functionally, involved in de novo synthesis of methionine. In Neurospora crassa (strain ATCC 24698 / 74-OR23-1A / CBS 708.71 / DSM 1257 / FGSC 987), this protein is Cystathionine beta-lyase (met-2).